Reading from the N-terminus, the 59-residue chain is Cytochrome c oxidase subunit 7 (59 aa).

Over 1-24 the chain is Mitochondrial matrix; the sequence is MKNTIVQQQRFLQSIHKPTYLQRP. Residues 25–47 form a helical membrane-spanning segment; that stretch reads GSFALVYPYYAVMAGLGLYSLYA. Residues 48-59 are Mitochondrial intermembrane-facing; the sequence is SGRVIFGKKDAF.

It belongs to the cytochrome c oxidase subunit 7 family. As to quaternary structure, component of the cytochrome c oxidase (complex IV, CIV), a multisubunit enzyme composed of a catalytic core of 3 subunits and several supernumerary subunits. The complex exists as a monomer or a dimer and forms supercomplexes (SCs) in the inner mitochondrial membrane with ubiquinol-cytochrome c oxidoreductase (cytochrome b-c1 complex, complex III, CIII).

It localises to the mitochondrion inner membrane. The protein operates within energy metabolism; oxidative phosphorylation. Functionally, component of the cytochrome c oxidase, the last enzyme in the mitochondrial electron transport chain which drives oxidative phosphorylation. The respiratory chain contains 3 multisubunit complexes succinate dehydrogenase (complex II, CII), ubiquinol-cytochrome c oxidoreductase (cytochrome b-c1 complex, complex III, CIII) and cytochrome c oxidase (complex IV, CIV), that cooperate to transfer electrons derived from NADH and succinate to molecular oxygen, creating an electrochemical gradient over the inner membrane that drives transmembrane transport and the ATP synthase. Cytochrome c oxidase is the component of the respiratory chain that catalyzes the reduction of oxygen to water. Electrons originating from reduced cytochrome c in the intermembrane space (IMS) are transferred via the dinuclear copper A center (CU(A)) of subunit 2 and heme A of subunit 1 to the active site in subunit 1, a binuclear center (BNC) formed by heme A3 and copper B (CU(B)). The BNC reduces molecular oxygen to 2 water molecules using 4 electrons from cytochrome c in the IMS and 4 protons from the mitochondrial matrix. This is Cytochrome c oxidase subunit 7 (cox7) from Schizosaccharomyces pombe (strain 972 / ATCC 24843) (Fission yeast).